The primary structure comprises 1544 residues: Lysine-specific demethylase 5B (1544 aa).

Positions 32–73 (CPVFEPSWEEFADPFAFIHKIRPIAEQTGICKVRPPPDWQPP) constitute a JmjN domain. In terms of domain architecture, ARID spans 97–187 (TRVKLNFLDQ…ILNPYNLFLS (91 aa)). Residues Lys148, Lys204, Lys209, Lys242, Lys274, and Lys278 each participate in a glycyl lysine isopeptide (Lys-Gly) (interchain with G-Cter in SUMO2) cross-link. Positions 201–230 (TDTKDKEYKPHDIPQRQSVQPSETCPPARR) are disordered. The span at 202–214 (DTKDKEYKPHDIP) shows a compositional bias: basic and acidic residues. A PHD-type 1 zinc finger spans residues 309–359 (LYVCLLCGSGNDEDRLLLCDGCDDSYHTFCLIPPLHDVPKGDWRCPKCLAQ). Tyr425 contributes to the 2-oxoglutarate binding site. In terms of domain architecture, JmjC spans 453 to 619 (EYLDSGWNLN…LGRQCVEHYR (167 aa)). Fe cation-binding residues include His499 and Glu501. 2-oxoglutarate contacts are provided by Ser507, Asn509, and Lys517. His587 is a Fe cation binding site. The segment at 692 to 744 (CVKCKTTCFMSAISCSCKPGLLVCLHHVKELCSCPPYKYKLRYRYTLDDLYPM) adopts a C5HC2 zinc-finger fold. Residue Lys769 forms a Glycyl lysine isopeptide (Lys-Gly) (interchain with G-Cter in SUMO2) linkage. Lys832 carries the N6-acetyllysine modification. At Ser986 the chain carries Phosphoserine. The segment at 1176 to 1224 (IKICLCQKAPAAPMIQCELCRDAFHTSCVAVPSISQGLRIWLCPHCRRS) adopts a PHD-type 2 zinc-finger fold. At Ser1328 the chain carries Phosphoserine. Positions 1374-1400 (PSPAQQTDRSSPVRPSSEKNDCCRGKR) are disordered. Polar residues predominate over residues 1376–1387 (PAQQTDRSSPVR). Over residues 1389 to 1400 (SSEKNDCCRGKR) the composition is skewed to basic and acidic residues. Lys1450 participates in a covalent cross-link: Glycyl lysine isopeptide (Lys-Gly) (interchain with G-Cter in SUMO2). Ser1456 carries the post-translational modification Phosphoserine. Residues 1484 to 1538 (DAICPAVSCLQPEGDEVDWVQCDGSCNQWFHQVCVGVSPEMAEKEDYICVRCTVK) form a PHD-type 3 zinc finger.

Belongs to the JARID1 histone demethylase family. As to quaternary structure, interacts with FOXG1B, PAX9, MYC, MYCN and RB1. Interacts with HDAC1, HDAC4, HDAC5 and HDAC7. Interacts (via PHD-type 1 zinc finger) with histone H3 unmodified at 'Lys-4'; the interaction is inhibited when histone H3 is methylated at 'Arg-2' or 'Lys-4'. It depends on Fe(2+) as a cofactor. Ubiquitously expressed, with highest levels in testis. Down-regulated in melanoma and glioblastoma. Up-regulated in breast cancer (at protein level).

It is found in the nucleus. It carries out the reaction N(6),N(6),N(6)-trimethyl-L-lysyl(4)-[histone H3] + 3 2-oxoglutarate + 3 O2 = L-lysyl(4)-[histone H3] + 3 formaldehyde + 3 succinate + 3 CO2. Its activity is regulated as follows. Several specific inhibitors are being developed and tested. The inhibitor KDOAM-25 inhibits its demethylase activity, resulting to cell cycle arrest in myeloma cells. Functionally, histone demethylase that demethylates 'Lys-4' of histone H3, thereby playing a central role in histone code. Does not demethylate histone H3 'Lys-9' or H3 'Lys-27'. Demethylates trimethylated, dimethylated and monomethylated H3 'Lys-4'. Acts as a transcriptional corepressor for FOXG1B and PAX9. Favors the proliferation of breast cancer cells by repressing tumor suppressor genes such as BRCA1 and HOXA5. In contrast, may act as a tumor suppressor for melanoma. Represses the CLOCK-BMAL1 heterodimer-mediated transcriptional activation of the core clock component PER2. This chain is Lysine-specific demethylase 5B (KDM5B), found in Homo sapiens (Human).